Here is a 565-residue protein sequence, read N- to C-terminus: MEPKTKKQRSLYIPYAGPVLLEFPLLNKGSAFSMEERRNFNLLGLLPEVVETIEEQAERAWIQYQGFKTEIDKHIYLRNIQDTNETLFYRLVNNHLDEMMPVIYTPTVGAACERFSEIYRRSRGVFISYQNRHNMDDILQNVPNHNIKVIVVTDGERILGLGDQGIGGMGIPIGKLSLYTACGGISPAYTLPVVLDVGTNNQQLLNDPLYMGWRNPRITDDEYYEFVDEFIQAVKQRWPDVLLQFEDFAQKNAMPLLNRYRNEICSFNDDIQGTAAVTVGTLIAASRAAGGQLSEKKIVFLGAGSAGCGIAEMIIAQTQREGLSEEAARQKVFMVDRFGLLTDKMPNLLPFQTKLVQKRENLSDRDTDSDVLSLLDVVRNVKPDILIGVSGQTGLFTEEIIREMHKHCPRPIVMPLSNPTSRVEATPQDIIAWTEGNALVATGSPFNPVVWKDKIYPIAQCNNAFIFPGIGLGVIASGASRITDEMLMSASETLAQYSPLVLNGEGLVLPELKDIQKVSRAIAFAVGKMAQQQGVAVKTSAEALQQAIDDNFWQAEYRDYRRTSI.

Tyrosine 104 acts as the Proton donor in catalysis. Arginine 157 provides a ligand contact to NAD(+). Lysine 175 serves as the catalytic Proton acceptor. A divalent metal cation contacts are provided by glutamate 246, aspartate 247, and aspartate 270. Residues aspartate 270 and asparagine 418 each coordinate NAD(+).

It belongs to the malic enzymes family. Homotetramer. Requires Mg(2+) as cofactor. The cofactor is Mn(2+).

The enzyme catalyses (S)-malate + NAD(+) = pyruvate + CO2 + NADH. The catalysed reaction is oxaloacetate + H(+) = pyruvate + CO2. The chain is NAD-dependent malic enzyme from Escherichia coli O157:H7.